Reading from the N-terminus, the 201-residue chain is Myosin regulatory light chain 2 (201 aa).

A disordered region spans residues 1–48; sequence MADKDKKVKKKKAKEDAPAEEAPAAAAPAGDRQSSRGSRKAKRTGSNV. Over residues 20-29 the composition is skewed to low complexity; it reads EEAPAAAAPA. Residue serine 46 is modified to Phosphoserine. EF-hand domains follow at residues 55–90, 125–158, and 159–194; these read KQVA…LGRL, DEDD…WGDK, and FSAD…SAEE. Ca(2+)-binding residues include aspartate 68, aspartate 70, aspartate 72, and aspartate 79.

Myosin is a hexamer of 2 heavy chains and 4 light chains.

In Bombyx mori (Silk moth), this protein is Myosin regulatory light chain 2.